Here is a 224-residue protein sequence, read N- to C-terminus: Biosynthetic peptidoglycan transglycosylase (224 aa).

A helical transmembrane segment spans residues 9–29 (VLILVSFVLLIQLWIFCSLAW).

The protein belongs to the glycosyltransferase 51 family.

It is found in the cell inner membrane. The catalysed reaction is [GlcNAc-(1-&gt;4)-Mur2Ac(oyl-L-Ala-gamma-D-Glu-L-Lys-D-Ala-D-Ala)](n)-di-trans,octa-cis-undecaprenyl diphosphate + beta-D-GlcNAc-(1-&gt;4)-Mur2Ac(oyl-L-Ala-gamma-D-Glu-L-Lys-D-Ala-D-Ala)-di-trans,octa-cis-undecaprenyl diphosphate = [GlcNAc-(1-&gt;4)-Mur2Ac(oyl-L-Ala-gamma-D-Glu-L-Lys-D-Ala-D-Ala)](n+1)-di-trans,octa-cis-undecaprenyl diphosphate + di-trans,octa-cis-undecaprenyl diphosphate + H(+). It functions in the pathway cell wall biogenesis; peptidoglycan biosynthesis. Functionally, peptidoglycan polymerase that catalyzes glycan chain elongation from lipid-linked precursors. The protein is Biosynthetic peptidoglycan transglycosylase of Acinetobacter baylyi (strain ATCC 33305 / BD413 / ADP1).